Reading from the N-terminus, the 219-residue chain is 2-hydroxy-3-keto-5-methylthiopentenyl-1-phosphate phosphatase (219 aa).

It belongs to the HAD-like hydrolase superfamily. MtnX family.

The enzyme catalyses 2-hydroxy-5-methylsulfanyl-3-oxopent-1-enyl phosphate + H2O = 1,2-dihydroxy-5-(methylsulfanyl)pent-1-en-3-one + phosphate. It participates in amino-acid biosynthesis; L-methionine biosynthesis via salvage pathway; L-methionine from S-methyl-5-thio-alpha-D-ribose 1-phosphate: step 4/6. Functionally, dephosphorylates 2-hydroxy-3-keto-5-methylthiopentenyl-1-phosphate (HK-MTPenyl-1-P) yielding 1,2-dihydroxy-3-keto-5-methylthiopentene (DHK-MTPene). The chain is 2-hydroxy-3-keto-5-methylthiopentenyl-1-phosphate phosphatase from Bacillus cereus (strain AH187).